The chain runs to 245 residues: Fibroblast growth factor 3 (245 aa).

Residues methionine 1–proline 17 form the signal peptide. Residue asparagine 65 is glycosylated (N-linked (GlcNAc...) asparagine). Disordered regions lie at residues glycine 137–arginine 181 and glutamine 195–alanine 245. Positions glycine 161–glutamine 173 are enriched in basic residues. Residues threonine 226 to histidine 238 show a composition bias toward polar residues.

The protein belongs to the heparin-binding growth factors family. In terms of assembly, interacts with FGFR1 and FGFR2. Affinity between fibroblast growth factors (FGFs) and their receptors is increased by heparan sulfate glycosaminoglycans that function as coreceptors. Glycosylated.

Its subcellular location is the nucleus. It is found in the endoplasmic reticulum. It localises to the golgi apparatus. Its function is as follows. Plays an important role in the regulation of embryonic development, cell proliferation, and cell differentiation. Required for normal ear development. The sequence is that of Fibroblast growth factor 3 (Fgf3) from Mus musculus (Mouse).